Consider the following 583-residue polypeptide: MPRGLELLIAQTILQGFDAQYGRFLEVTSGAQQRFEQADWHAVQQAMKSRIHLYDHHVGLVVEQLRCITDGKSTDADFLLRVKEHYTRLLPDYPRFEIAESFFNSVYCRLFDHRSLTPERLFIFSSQPERRFRTIPRPLAKDFFPDHGWEPLLMRILSDLPLRLPWQNKSRDIRYIIAHLTETLGEDALPRCHVQVANELFYRNKAAWLVGKLTTPDGTLPFLLPIHRTDEGELFVDTCLTTTAEASIVFGFARSYFMVYAPLPAALVEWLREILPGKTTAELYMAIGCQKHAKTESYREYLCYLAESDEKFIEAPGIRGMVMLVFTLPGFDRVFKIIKDKFAPQKEMSAAHVRACYQLVKEHDRVGRMADTQEFENFVLDKRQIDPALMALLRQEAPEKITDLGEHIVIRHLYIERRMVPLNIWLEQVEGQQLRDAIEEYGNAIRQLAAANIFPGDMLFKNFGVTRHGRVVFYDYDEICYMTEVNFRDIPPARYPEDELASEPWYSVSPGDVFPEEFRHWLCADPRIGPLFEEMHADLFRADYWRALQTRIKEGHVEDVYAYRRRQRFSVRYGAISSTANSS.

ATP-binding positions include 315–321 and lysine 336; that span reads APGIRGM. Residue aspartate 371 is part of the active site.

Belongs to the AceK family.

It is found in the cytoplasm. It carries out the reaction L-seryl-[isocitrate dehydrogenase] + ATP = O-phospho-L-seryl-[isocitrate dehydrogenase] + ADP + H(+). In terms of biological role, bifunctional enzyme which can phosphorylate or dephosphorylate isocitrate dehydrogenase (IDH) on a specific serine residue. This is a regulatory mechanism which enables bacteria to bypass the Krebs cycle via the glyoxylate shunt in response to the source of carbon. When bacteria are grown on glucose, IDH is fully active and unphosphorylated, but when grown on acetate or ethanol, the activity of IDH declines drastically concomitant with its phosphorylation. The protein is Isocitrate dehydrogenase kinase/phosphatase of Salmonella agona (strain SL483).